The primary structure comprises 783 residues: Galactinol--sucrose galactosyltransferase (783 aa).

Belongs to the glycosyl hydrolases 36 family.

The catalysed reaction is alpha-D-galactosyl-(1-&gt;3)-1D-myo-inositol + sucrose = raffinose + myo-inositol. Its activity is regulated as follows. Inhibited by Ag(2)+, Hg(2+), Zn(2+), p-chloromercuribenzoate (pCMB) and 1-deoxygalactonojirimycin. In terms of biological role, transglycosidase operating by a ping-pong reaction mechanism. Involved in the synthesis of raffinose, a major soluble carbohydrate in seeds, roots and tubers. Specific for galactinol and p-nitrophenyl-alpha-D-galactoside as galactosyl donors. Able to utilize sucrose, lactose, 4-beta-galactobiose, N-acetyl-D-lactosamine, trehalose and lacto-N-biose as acceptors. May also act as a glycoside hydrolase. The sequence is that of Galactinol--sucrose galactosyltransferase (RFS) from Oryza sativa subsp. japonica (Rice).